The chain runs to 519 residues: uncharacterized protein (519 aa).

The next 4 membrane-spanning stretches (helical) occupy residues G141–F161, L202–A222, F385–G405, and T433–V453.

The protein resides in the cell membrane. This is an uncharacterized protein from Sinorhizobium fredii (strain NBRC 101917 / NGR234).